We begin with the raw amino-acid sequence, 86 residues long: Toxin Td8 (86 aa).

The N-terminal stretch at methionine 1–cysteine 20 is a signal peptide. An LCN-type CS-alpha/beta domain is found at lysine 21–arginine 83. Cystine bridges form between cysteine 31-cysteine 82, cysteine 35-cysteine 57, cysteine 43-cysteine 63, and cysteine 47-cysteine 65. Arginine 83 is subject to Arginine amide.

Expressed by the venom gland.

It is found in the secreted. Beta toxins bind voltage-independently at site-4 of sodium channels (Nav) and shift the voltage of activation toward more negative potentials thereby affecting sodium channel activation and promoting spontaneous and repetitive firing. This Tityus discrepans (Venezuelan scorpion) protein is Toxin Td8.